A 22-amino-acid polypeptide reads, in one-letter code: 2.4 kDa venom peptide (22 aa).

Post-translationally, contains 2 disulfide bonds. As to expression, expressed by the venom gland.

The protein resides in the secreted. In terms of biological role, not lethal to mice by intraperitoneal or intracerebroventricular injections in doses up to 150 micrograms. In Heterometrus spinifer (Asia giant forest scorpion), this protein is 2.4 kDa venom peptide.